The primary structure comprises 201 residues: FMN-dependent NADH:quinone oxidoreductase (201 aa).

FMN contacts are provided by residues Ser-10, 16 to 18 (SQS), and 96 to 99 (MYNF).

Belongs to the azoreductase type 1 family. As to quaternary structure, homodimer. FMN serves as cofactor.

It catalyses the reaction 2 a quinone + NADH + H(+) = 2 a 1,4-benzosemiquinone + NAD(+). It carries out the reaction N,N-dimethyl-1,4-phenylenediamine + anthranilate + 2 NAD(+) = 2-(4-dimethylaminophenyl)diazenylbenzoate + 2 NADH + 2 H(+). Functionally, quinone reductase that provides resistance to thiol-specific stress caused by electrophilic quinones. Its function is as follows. Also exhibits azoreductase activity. Catalyzes the reductive cleavage of the azo bond in aromatic azo compounds to the corresponding amines. This Sodalis glossinidius (strain morsitans) protein is FMN-dependent NADH:quinone oxidoreductase.